The primary structure comprises 338 residues: Phosphonates-binding periplasmic protein (338 aa).

An N-terminal signal peptide occupies residues 1-26 (MNAKIIASLAFTSMFSLSTLLSPAHA).

The protein belongs to the phosphate/phosphite/phosphonate binding protein family. As to quaternary structure, the complex is composed of two ATP-binding proteins (PhnC), two transmembrane proteins (PhnE) and a solute-binding protein (PhnD).

It localises to the periplasm. Functionally, phosphonate binding protein that is part of the phosphonate uptake system. Exhibits high affinity for 2-aminoethylphosphonate, and somewhat less affinity to ethylphosphonate, methylphosphonate, phosphonoacetate and phenylphosphonate. This chain is Phosphonates-binding periplasmic protein (phnD), found in Escherichia coli (strain K12).